We begin with the raw amino-acid sequence, 494 residues long: Smoothelin-like protein 1 (494 aa).

4 stretches are compositionally biased toward basic and acidic residues: residues Met1–Glu10, Asp74–Thr104, Thr112–Val166, and Thr179–Ala232. Positions Met1 to Asn348 are disordered. Residues Lys123–Lys145 adopt a coiled-coil conformation. Residues Asp233 to Gln255 are compositionally biased toward acidic residues. Composition is skewed to low complexity over residues Pro269–Pro279 and Ser302–Pro314. Residues Gly324–Val335 show a composition bias toward basic and acidic residues. Residue Ser336 is modified to Phosphoserine. One can recognise a Calponin-homology (CH) domain in the interval Gly378–Val484. The tract at residues Ile476–Lys494 is calmodulin-binding.

It belongs to the smoothelin family. As to quaternary structure, interacts with PPP1R12A. Post-translationally, maximal phosphorylation of Ser-336 correlates with maximal relaxation of aorta in response to acetylcholine. In terms of tissue distribution, expressed in striated muscles, specifically in type 2a fibers (at protein level).

The protein localises to the cytoplasm. It localises to the myofibril. The protein resides in the sarcomere. It is found in the i band. Its subcellular location is the m line. The protein localises to the nucleus. Functionally, plays a role in the regulation of contractile properties of both striated and smooth muscles. When unphosphorylated, may inhibit myosin dephosphorylation. Phosphorylation at Ser-299 reduces this inhibitory activity. The sequence is that of Smoothelin-like protein 1 (SMTNL1) from Homo sapiens (Human).